Reading from the N-terminus, the 133-residue chain is DNA-directed RNA polymerase subunit omega (133 aa).

Belongs to the RNA polymerase subunit omega family. The RNAP catalytic core consists of 2 alpha, 1 beta, 1 beta' and 1 omega subunit. When a sigma factor is associated with the core the holoenzyme is formed, which can initiate transcription.

It catalyses the reaction RNA(n) + a ribonucleoside 5'-triphosphate = RNA(n+1) + diphosphate. Functionally, promotes RNA polymerase assembly. Latches the N- and C-terminal regions of the beta' subunit thereby facilitating its interaction with the beta and alpha subunits. In Brucella canis (strain ATCC 23365 / NCTC 10854 / RM-666), this protein is DNA-directed RNA polymerase subunit omega.